We begin with the raw amino-acid sequence, 154 residues long: SsrA-binding protein (154 aa).

The interval 134–154 is disordered; the sequence is KRQAIKERQTQREIQRELKER.

This sequence belongs to the SmpB family.

Its subcellular location is the cytoplasm. Required for rescue of stalled ribosomes mediated by trans-translation. Binds to transfer-messenger RNA (tmRNA), required for stable association of tmRNA with ribosomes. tmRNA and SmpB together mimic tRNA shape, replacing the anticodon stem-loop with SmpB. tmRNA is encoded by the ssrA gene; the 2 termini fold to resemble tRNA(Ala) and it encodes a 'tag peptide', a short internal open reading frame. During trans-translation Ala-aminoacylated tmRNA acts like a tRNA, entering the A-site of stalled ribosomes, displacing the stalled mRNA. The ribosome then switches to translate the ORF on the tmRNA; the nascent peptide is terminated with the 'tag peptide' encoded by the tmRNA and targeted for degradation. The ribosome is freed to recommence translation, which seems to be the essential function of trans-translation. The sequence is that of SsrA-binding protein from Synechococcus sp. (strain JA-2-3B'a(2-13)) (Cyanobacteria bacterium Yellowstone B-Prime).